The sequence spans 2729 residues: Protein NO VEIN (2729 aa).

The segment at 1–27 (MQGNHDGSWSLHPSTNNGSGRANGNIN) is disordered. 2 consecutive short sequence motifs (nuclear localization signal) follow at residues 194–201 (KRKVDVLR) and 473–480 (MKRLGGSN). 2 disordered regions span residues 477–517 (GGSN…IPKL) and 2482–2515 (LPSSSKTRHGSSKTNTDDSKQELDTSSSKEDVTE). 2 stretches are compositionally biased toward basic and acidic residues: residues 488-497 (RNHEKSDSSK) and 2496-2515 (NTDDSKQELDTSSSKEDVTE).

In terms of tissue distribution, specifically expressed in developing embryos, leaf primordia, and shoot and root apical meristems.

The protein resides in the nucleus. Its function is as follows. Essential protein required for cell fate determination during embryogenesis. Mediates auxin-dependent coordinated cell-fate specification and patterning in embryos (e.g. cotyledon outgrowth and separation), shoots and roots (e.g. leaf vascular development, cellular patterning and stem cell maintenance in the meristems). Required for provascular PIN1 expression and region-specific expression of PIN7 in leaf primordia, cell type-specific expression of PIN3, PIN4, and PIN7 in the root, and PIN2 polarity in the root cortex. In Arabidopsis thaliana (Mouse-ear cress), this protein is Protein NO VEIN.